The primary structure comprises 656 residues: Acetyl-coenzyme A synthetase (656 aa).

CoA contacts are provided by residues 198–201 (RGGR) and Thr-316. ATP-binding positions include 392-394 (GEP), 416-421 (DTFWQT), Asp-507, and Arg-522. Residue Ser-530 participates in CoA binding. Arg-533 provides a ligand contact to ATP. Residues Val-544, His-546, and Val-549 each contribute to the Mg(2+) site. Residue Arg-591 coordinates CoA. The residue at position 616 (Lys-616) is an N6-acetyllysine.

It belongs to the ATP-dependent AMP-binding enzyme family. Requires Mg(2+) as cofactor. Acetylated. Deacetylation by the SIR2-homolog deacetylase activates the enzyme.

The enzyme catalyses acetate + ATP + CoA = acetyl-CoA + AMP + diphosphate. Catalyzes the conversion of acetate into acetyl-CoA (AcCoA), an essential intermediate at the junction of anabolic and catabolic pathways. AcsA undergoes a two-step reaction. In the first half reaction, AcsA combines acetate with ATP to form acetyl-adenylate (AcAMP) intermediate. In the second half reaction, it can then transfer the acetyl group from AcAMP to the sulfhydryl group of CoA, forming the product AcCoA. This chain is Acetyl-coenzyme A synthetase, found in Rhodobacter capsulatus (strain ATCC BAA-309 / NBRC 16581 / SB1003).